Here is a 235-residue protein sequence, read N- to C-terminus: Sugar fermentation stimulation protein homolog (235 aa).

It belongs to the SfsA family.

This chain is Sugar fermentation stimulation protein homolog, found in Pseudomonas aeruginosa (strain ATCC 15692 / DSM 22644 / CIP 104116 / JCM 14847 / LMG 12228 / 1C / PRS 101 / PAO1).